Here is a 209-residue protein sequence, read N- to C-terminus: Ribosomal RNA large subunit methyltransferase E (209 aa).

Residues G63, W65, D83, D99, and D124 each contribute to the S-adenosyl-L-methionine site. The Proton acceptor role is filled by K164.

It belongs to the class I-like SAM-binding methyltransferase superfamily. RNA methyltransferase RlmE family.

It is found in the cytoplasm. It carries out the reaction uridine(2552) in 23S rRNA + S-adenosyl-L-methionine = 2'-O-methyluridine(2552) in 23S rRNA + S-adenosyl-L-homocysteine + H(+). Functionally, specifically methylates the uridine in position 2552 of 23S rRNA at the 2'-O position of the ribose in the fully assembled 50S ribosomal subunit. In Buchnera aphidicola subsp. Cinara cedri (strain Cc), this protein is Ribosomal RNA large subunit methyltransferase E.